A 358-amino-acid polypeptide reads, in one-letter code: uncharacterized protein (358 aa).

207-214 (AAVKDGKT) lines the ATP pocket.

This is an uncharacterized protein from Bacillus subtilis (strain 168).